A 717-amino-acid polypeptide reads, in one-letter code: Methionine--tRNA ligase (717 aa).

The 'HIGH' region motif lies at 19-29 (PYANGDLHVGH). Positions 150, 153, 162, and 166 each coordinate Zn(2+). The 'KMSKS' region signature appears at 356 to 360 (ALSTS). Threonine 359 is a binding site for ATP. Positions 573–603 (ERVEEASEASAEASNEGGEAAGDEVDDGDVD) are disordered. Residues 580–590 (EASAEASNEGG) are compositionally biased toward low complexity. Over residues 593–603 (AGDEVDDGDVD) the composition is skewed to acidic residues. Positions 619-717 (DFEGVDMRVG…EDAPLGTRIK (99 aa)) constitute a tRNA-binding domain.

Belongs to the class-I aminoacyl-tRNA synthetase family. MetG type 1 subfamily. Homodimer. Requires Zn(2+) as cofactor.

It is found in the cytoplasm. The enzyme catalyses tRNA(Met) + L-methionine + ATP = L-methionyl-tRNA(Met) + AMP + diphosphate. Its function is as follows. Is required not only for elongation of protein synthesis but also for the initiation of all mRNA translation through initiator tRNA(fMet) aminoacylation. This Haloarcula marismortui (strain ATCC 43049 / DSM 3752 / JCM 8966 / VKM B-1809) (Halobacterium marismortui) protein is Methionine--tRNA ligase.